We begin with the raw amino-acid sequence, 282 residues long: Transcription factor MYB1 (282 aa).

HTH myb-type domains follow at residues 9 to 61 (KEGL…LNYL) and 62 to 116 (RPDI…SKKV). 2 DNA-binding regions (H-T-H motif) span residues 37–61 (WRDL…LNYL) and 89–112 (WSLI…NTYL). The segment at 258 to 282 (EDDWKQNGGKDELMGGGNGGPSSVS) is disordered. Residues 260–270 (DWKQNGGKDEL) show a composition bias toward basic and acidic residues. Gly residues predominate over residues 271-282 (MGGGNGGPSSVS).

The protein localises to the nucleus. Transcription activator involved in the spatiotemporal regulation of flavonoid biosynthesis specifically in the corms of Montbretia. Activates the promoters of enzymes involved in the biosynthesis of the flavonol kaempferol and the flavonol-glycoside kaempferol-rhamnoside. The polypeptide is Transcription factor MYB1 (Crocosmia x crocosmiiflora (Montbretia)).